Here is a 228-residue protein sequence, read N- to C-terminus: Urease accessory protein UreF (228 aa).

This sequence belongs to the UreF family. In terms of assembly, ureD, UreF and UreG form a complex that acts as a GTP-hydrolysis-dependent molecular chaperone, activating the urease apoprotein by helping to assemble the nickel containing metallocenter of UreC. The UreE protein probably delivers the nickel.

Its subcellular location is the cytoplasm. In terms of biological role, required for maturation of urease via the functional incorporation of the urease nickel metallocenter. This is Urease accessory protein UreF from Dechloromonas aromatica (strain RCB).